The primary structure comprises 150 residues: Endoribonuclease YbeY (150 aa).

Zn(2+) contacts are provided by His-112, His-116, and His-122.

It belongs to the endoribonuclease YbeY family. Zn(2+) serves as cofactor.

Its subcellular location is the cytoplasm. Its function is as follows. Single strand-specific metallo-endoribonuclease involved in late-stage 70S ribosome quality control and in maturation of the 3' terminus of the 16S rRNA. This is Endoribonuclease YbeY from Bdellovibrio bacteriovorus (strain ATCC 15356 / DSM 50701 / NCIMB 9529 / HD100).